The following is a 141-amino-acid chain: Hemoglobin subunit alpha-A (141 aa).

The Globin domain maps to 1–141 (VLNAGDKANV…VGTVLTSKYR (141 aa)). His58 is an O2 binding site. His87 contributes to the heme b binding site.

This sequence belongs to the globin family. In terms of assembly, heterotetramer of two alpha chains and two beta chains. Red blood cells.

In terms of biological role, involved in oxygen transport from the lung to the various peripheral tissues. This chain is Hemoglobin subunit alpha-A (HBAA), found in Chrysemys picta bellii (Western painted turtle).